The primary structure comprises 444 residues: MKKLNADDYIDILNDVLKDICPTDSEKEELKIFSDKIISKIKDISKYPVLDIIQVGSTARDANLKNDHDIDIFLRFEKETDRDMLKELGLKLGKDVINYFNGKSWIEYAEHPYVSGEIGKFNLDIVPCYDIENCEKIISAVDRTPLHNEFLLNAYENNDLSNDIRLLKKFLKGLGIYGSDLKTAGFSGYLCELLILKYRGFLNLLSAVQTWKPKHSIVLDEIYEMYDLKKDHDFLKFNDSLVVYDPVDLNRNVAAALNKENLCKFIFYSKMFLKKPSKEFFYGFYKKTTDLLNQRKRGYLITLEILRPENIVEDVIYPQMEKIQKSINKLVKEHDFEYLQYQNFADDNTCYLSWEFLIHELPDVKLRIGPPVYSEQGVLNFITHNEHYFVKECNVCAYKTRKYKNIQILFEDIVNGKLKNIITYPKYVCPENAKIRLGTFIERK.

Positions 57 and 60 each coordinate ATP. Residues Ser-57 and Arg-60 each coordinate CTP. The Mg(2+) site is built by Asp-69, Asp-71, and Asp-124. Residues His-147, Lys-168, and Tyr-177 each coordinate ATP. His-147, Lys-168, and Tyr-177 together coordinate CTP.

This sequence belongs to the tRNA nucleotidyltransferase/poly(A) polymerase family. Archaeal CCA-adding enzyme subfamily. In terms of assembly, homodimer. Mg(2+) serves as cofactor.

The catalysed reaction is a tRNA precursor + 2 CTP + ATP = a tRNA with a 3' CCA end + 3 diphosphate. It carries out the reaction a tRNA with a 3' CCA end + 2 CTP + ATP = a tRNA with a 3' CCACCA end + 3 diphosphate. Its function is as follows. Catalyzes the addition and repair of the essential 3'-terminal CCA sequence in tRNAs without using a nucleic acid template. Adds these three nucleotides in the order of C, C, and A to the tRNA nucleotide-73, using CTP and ATP as substrates and producing inorganic pyrophosphate. tRNA 3'-terminal CCA addition is required both for tRNA processing and repair. Also involved in tRNA surveillance by mediating tandem CCA addition to generate a CCACCA at the 3' terminus of unstable tRNAs. While stable tRNAs receive only 3'-terminal CCA, unstable tRNAs are marked with CCACCA and rapidly degraded. This is CCA-adding enzyme from Methanococcus maripaludis (strain DSM 14266 / JCM 13030 / NBRC 101832 / S2 / LL).